The primary structure comprises 153 residues: Ribosome maturation factor RimP (153 aa).

This sequence belongs to the RimP family.

The protein resides in the cytoplasm. Required for maturation of 30S ribosomal subunits. This chain is Ribosome maturation factor RimP, found in Picosynechococcus sp. (strain ATCC 27264 / PCC 7002 / PR-6) (Agmenellum quadruplicatum).